The sequence spans 104 residues: Large ribosomal subunit protein uL24 (104 aa).

This sequence belongs to the universal ribosomal protein uL24 family. In terms of assembly, part of the 50S ribosomal subunit.

Its function is as follows. One of two assembly initiator proteins, it binds directly to the 5'-end of the 23S rRNA, where it nucleates assembly of the 50S subunit. Functionally, one of the proteins that surrounds the polypeptide exit tunnel on the outside of the subunit. This chain is Large ribosomal subunit protein uL24, found in Pseudoalteromonas translucida (strain TAC 125).